A 530-amino-acid chain; its full sequence is UDP-glucuronosyltransferase 1A8 (530 aa).

A signal peptide spans 1-25 (MARTGWTSPIPLCVSLLLTCGFAEA). N-linked (GlcNAc...) asparagine glycans are attached at residues Asn-71, Asn-292, and Asn-344. The helical transmembrane segment at 488–504 (VIGFLLAVVLTVAFITF) threads the bilayer.

The protein belongs to the UDP-glycosyltransferase family. In terms of assembly, homodimer. Homooligomer. Interacts with UGT1A1, UGT1A3, UGT1A4, UGT1A6, UGT1A7, UGT1A9 and UGT1A10 to form heterodimers. Isoform 1 interacts with isoform 2/i2 suggesting that oligomerization is involved in negative regulation of transferase activity by isoform 2. Isoform 1 also interacts with respective i2 isoforms of UGT1A1, UGT1A3, UGT1A4, UGT1A6, UGT1A7, UGT1A9 and UGT1A10. Expressed in kidney, colon and small intestine. Not expressed in liver. In terms of tissue distribution, expressed in liver, kidney, colon and small intestine.

It is found in the endoplasmic reticulum membrane. The enzyme catalyses glucuronate acceptor + UDP-alpha-D-glucuronate = acceptor beta-D-glucuronoside + UDP + H(+). The catalysed reaction is 17beta-estradiol + UDP-alpha-D-glucuronate = 17beta-estradiol 3-O-(beta-D-glucuronate) + UDP + H(+). It carries out the reaction 17alpha-estradiol + UDP-alpha-D-glucuronate = 17alpha-estradiol 3-O-(beta-D-glucuronate) + UDP + H(+). It catalyses the reaction estrone + UDP-alpha-D-glucuronate = estrone 3-O-(beta-D-glucuronate) + UDP + H(+). The enzyme catalyses 16alpha,17alpha-estriol + UDP-alpha-D-glucuronate = 16alpha,17alpha-estriol 3-O-(beta-D-glucuronate) + UDP + H(+). The catalysed reaction is 2-hydroxy-17beta-estradiol + UDP-alpha-D-glucuronate = 2-hydroxy-17beta-estradiol 3-O-(beta-D-glucuronate) + UDP + H(+). It carries out the reaction 2-hydroxy-17beta-estradiol + UDP-alpha-D-glucuronate = 17beta-estradiol 2-O-(beta-D-glucuronate) + UDP + H(+). It catalyses the reaction 2-hydroxyestrone + UDP-alpha-D-glucuronate = 2-hydroxyestrone 3-O-(beta-D-glucuronate) + UDP + H(+). The enzyme catalyses 4-hydroxy-17beta-estradiol + UDP-alpha-D-glucuronate = 4-hydroxy-17beta-estradiol 3-O-(beta-D-glucuronate) + UDP + H(+). The catalysed reaction is 4-hydroxy-17beta-estradiol + UDP-alpha-D-glucuronate = 17beta-estradiol 4-O-(beta-D-glucuronate) + UDP + H(+). It carries out the reaction 4-hydroxyestrone + UDP-alpha-D-glucuronate = 4-hydroxyestrone 3-O-(beta-D-glucuronate) + UDP + H(+). It catalyses the reaction 4-hydroxyestrone + UDP-alpha-D-glucuronate = estrone 4-O-(beta-D-glucuronate) + UDP + H(+). The enzyme catalyses 2-methoxy-17beta-estradiol + UDP-alpha-D-glucuronate = 2-methoxy-17beta-estradiol 3-O-(beta-D-glucuronate) + UDP + H(+). The catalysed reaction is 2-methoxyestrone + UDP-alpha-D-glucuronate = 2-methoxyestrone 3-O-(beta-D-glucuronate) + UDP + H(+). It carries out the reaction 4-methoxy-17beta-estradiol + UDP-alpha-D-glucuronate = 4-methoxy-17beta-estradiol 3-O-(beta-D-glucuronate) + UDP + H(+). It catalyses the reaction 4-methoxyestrone + UDP-alpha-D-glucuronate = 4-methoxyestrone 3-O-(beta-D-glucuronate) + UDP + H(+). The enzyme catalyses 17beta-hydroxy-5alpha-androstan-3-one + UDP-alpha-D-glucuronate = 5alpha-dihydrotestosterone 17-O-(beta-D-glucuronate) + UDP + H(+). The catalysed reaction is 5alpha-dihydrotestosterone 17-O-(beta-D-glucuronate) + UDP-alpha-D-glucuronate = 5alpha-dihydrotestosterone 17-O-[beta-D-glucuronosyl-(1-&gt;2)-glucuronate] + UDP + H(+). It carries out the reaction prunetin + UDP-alpha-D-glucuronate = prunetin-4'-O-beta-D-glucuronide + UDP. It catalyses the reaction prunetin + UDP-alpha-D-glucuronate = prunetin-5-O-beta-D-glucuronide + UDP. The enzyme catalyses candesartan + UDP-alpha-D-glucuronate = candesartan O-beta-D-glucuronoside + UDP. The catalysed reaction is mycophenolate + UDP-alpha-D-glucuronate = mycophenolate 7-O-beta-D-glucuronide + UDP + H(+). It carries out the reaction (E)-ferulate + UDP-alpha-D-glucuronate = (E)-4-O-(beta-D-glucuronosyl)-ferulate + UDP + H(+). It catalyses the reaction (E)-ferulate + UDP-alpha-D-glucuronate = (E)-ferulic acid beta-D-glucuronate ester + UDP. Its function is as follows. UDP-glucuronosyltransferase (UGT) that catalyzes phase II biotransformation reactions in which lipophilic substrates are conjugated with glucuronic acid to increase the metabolite's water solubility, thereby facilitating excretion into either the urine or bile. Essential for the elimination and detoxification of drugs, xenobiotics and endogenous compounds. Catalyzes the glucuronidation of endogenous steroid hormones such as androgens and estrogens. Produces dihydrotestosterone (DHT) diglucuronide from the DHT after two subsequent glucoronidation steps. Involved in the glucuronidation of the phytochemical ferulic acid at the phenolic or the carboxylic acid group. Also catalyzes the glucuronidation of the isoflavones genistein, daidzein, glycitein, formononetin, biochanin A and prunetin, which are phytoestrogens with anticancer and cardiovascular properties. Involved in the glucuronidation of the AGTR1 angiotensin receptor antagonist caderastan, a drug which can inhibit the effect of angiotensin II. Also metabolizes mycophenolate, an immunosuppressive agent. Lacks UGT glucuronidation activity but acts as a negative regulator of isoform 1. The sequence is that of UDP-glucuronosyltransferase 1A8 from Homo sapiens (Human).